The chain runs to 84 residues: Large ribosomal subunit protein bL27 (84 aa).

This sequence belongs to the bacterial ribosomal protein bL27 family.

The protein is Large ribosomal subunit protein bL27 of Campylobacter lari (strain RM2100 / D67 / ATCC BAA-1060).